Reading from the N-terminus, the 561-residue chain is Potassium-transporting ATPase potassium-binding subunit (561 aa).

Helical transmembrane passes span 2–22 (GLGLLQIGLTLCIVIAITPVL), 65–85 (YIRAILYTNLFMGILVYSLIH), 135–155 (ALGFLMFTSAATGLAVGIAFI), 177–197 (ILLPISVIGAIALVLLGVPQT), 253–273 (FIETIAMIAIPAAMIYTYGVF), 280–300 (AWLLFWMVFIVFVILVWVAAT), 327–347 (FGWAETALWAVMTTATMCGAV), 353–373 (ALMPQGLFATLFNLFLQIIWG), 378–398 (GTAYLFIYLILTVFLTGLMVG), 413–433 (IVLASLILLVHPIVVLIPSAI), 482–502 (LSTSLSILVGRYVPIIAMLLL), and 531–551 (AGIVLILGVLTFFPVLALGPI).

It belongs to the KdpA family. The system is composed of three essential subunits: KdpA, KdpB and KdpC.

The protein localises to the cell membrane. Its function is as follows. Part of the high-affinity ATP-driven potassium transport (or Kdp) system, which catalyzes the hydrolysis of ATP coupled with the electrogenic transport of potassium into the cytoplasm. This subunit binds the extracellular potassium ions and delivers the ions to the membrane domain of KdpB through an intramembrane tunnel. The polypeptide is Potassium-transporting ATPase potassium-binding subunit (Anabaena sp. (strain L31)).